The primary structure comprises 253 residues: 5'-nucleotidase SurE (253 aa).

Residues Asp-8, Asp-9, Ser-39, and Asn-92 each coordinate a divalent metal cation.

Belongs to the SurE nucleotidase family. The cofactor is a divalent metal cation.

It is found in the cytoplasm. The enzyme catalyses a ribonucleoside 5'-phosphate + H2O = a ribonucleoside + phosphate. Its function is as follows. Nucleotidase that shows phosphatase activity on nucleoside 5'-monophosphates. The sequence is that of 5'-nucleotidase SurE from Burkholderia pseudomallei (strain 1710b).